Consider the following 184-residue polypeptide: ADP-ribosylation factor-like protein 2 (184 aa).

G2 is lipidated: N-myristoyl glycine. GTP-binding positions include 23 to 30 (GLDNAGKT), 66 to 70 (DIGGQ), and 125 to 128 (NKQD).

It belongs to the small GTPase superfamily. Arf family.

May be involved in trafficking events within the endosomal system. The chain is ADP-ribosylation factor-like protein 2 (arl2) from Dictyostelium discoideum (Social amoeba).